Consider the following 83-residue polypeptide: UPF0297 protein LEUM_0557 (83 aa).

It belongs to the UPF0297 family.

The polypeptide is UPF0297 protein LEUM_0557 (Leuconostoc mesenteroides subsp. mesenteroides (strain ATCC 8293 / DSM 20343 / BCRC 11652 / CCM 1803 / JCM 6124 / NCDO 523 / NBRC 100496 / NCIMB 8023 / NCTC 12954 / NRRL B-1118 / 37Y)).